The chain runs to 834 residues: Mannosyl-oligosaccharide glucosidase (834 aa).

Residues 1-10 (MARGERRRRA) are compositionally biased toward basic residues. The interval 1 to 37 (MARGERRRRAAAAEGARPLERARAAGRRDGRAGGARG) is disordered. Residues 1-43 (MARGERRRRAAAAEGARPLERARAAGRRDGRAGGARGSASGAA) lie on the Cytoplasmic side of the membrane. Residues 3-9 (RGERRRR) carry the Endoplasmic reticulum targeting motif. Over residues 17–31 (RPLERARAAGRRDGR) the composition is skewed to basic and acidic residues. Residues 44-64 (LAVVVLALAFGLSGRWVLAWL) traverse the membrane as a helical; Signal-anchor for type II membrane protein segment. Over 65–834 (RVRRALTLHP…LVLLIMAEEY (770 aa)) the chain is Lumenal. Residues 74–136 (PAPSALPPDS…GTPPKLRHTC (63 aa)) are required for endoplasmic reticulum targeting. The active-site Proton donor is the aspartate 580. A glycan (N-linked (GlcNAc...) asparagine) is linked at asparagine 654. Glutamate 804 (proton acceptor) is an active-site residue.

This sequence belongs to the glycosyl hydrolase 63 family.

The protein resides in the endoplasmic reticulum membrane. It carries out the reaction N(4)-(alpha-D-Glc-(1-&gt;2)-alpha-D-Glc-(1-&gt;3)-alpha-D-Glc-(1-&gt;3)-alpha-D-Man-(1-&gt;2)-alpha-D-Man-(1-&gt;2)-alpha-D-Man-(1-&gt;3)-[alpha-D-Man-(1-&gt;2)-alpha-D-Man-(1-&gt;3)-[alpha-D-Man-(1-&gt;2)-alpha-D-Man-(1-&gt;6)]-alpha-D-Man-(1-&gt;6)]-beta-D-Man-(1-&gt;4)-beta-D-GlcNAc-(1-&gt;4)-beta-D-GlcNAc)-L-asparaginyl-[protein] + H2O = N(4)-(alpha-D-Glc-(1-&gt;3)-alpha-D-Glc-(1-&gt;3)-alpha-D-Man-(1-&gt;2)-alpha-D-Man-(1-&gt;2)-alpha-D-Man-(1-&gt;3)-[alpha-D-Man-(1-&gt;2)-alpha-D-Man-(1-&gt;3)-[alpha-D-Man-(1-&gt;2)-alpha-D-Man-(1-&gt;6)]-alpha-D-Man-(1-&gt;6)]-beta-D-Man-(1-&gt;4)-beta-D-GlcNAc-(1-&gt;4)-beta-D-GlcNAc)-L-asparaginyl-[protein] + beta-D-glucose. It participates in glycan metabolism; N-glycan degradation. Inhibited by the deoxynojirimycin derivative N-9'-Methoxynonyl-1-Deoxynojirimycin. In terms of biological role, in the context of N-glycan degradation, cleaves the distal alpha 1,2-linked glucose residue from the Glc(3)Man(9)GlcNAc(2) oligosaccharide precursor in a highly specific manner. Functionally, (Microbial infection) Required for successful influenza or dengue virus infection; inhibition of its activity by a deoxynojirimycin derivative prevents death in mice infected with lethal doses of influenza or dengue viruses, even when administrated after infection. The chain is Mannosyl-oligosaccharide glucosidase from Mus musculus (Mouse).